The chain runs to 1719 residues: Sodium channel protein type 4 subunit alpha B (1719 aa).

Over 1–126 (MRTLLPPVGS…IVAIKILIHS (126 aa)) the chain is Cytoplasmic. The disordered stretch occupies residues 28–50 (QQIREEERKRTNAQVSEELPEPA). The stretch at 108–431 (LLSPFNALRI…VVAMAYAEQN (324 aa)) is one I repeat. Residues 127–145 (LFSLFIMATILTNCAFMTL) form a helical membrane-spanning segment. At 146 to 152 (SDPPAWS) the chain is on the extracellular side. The helical transmembrane segment at 153–173 (KTMEYVFTFIYTFEATIKILS) threads the bilayer. Over 174-187 (RGFCVGKFTFLKDP) the chain is Cytoplasmic. Residues 188 to 205 (WNWLDFMVISMAYLTELV) form a helical membrane-spanning segment. Over 206-211 (DLGNVS) the chain is Extracellular. A glycan (N-linked (GlcNAc...) asparagine) is linked at N209. A helical transmembrane segment spans residues 212–228 (VLRTFRVLRALKTITVI). The Cytoplasmic segment spans residues 229 to 247 (PGLKTIVGALIQSVRKLAD). A helical membrane pass occupies residues 248 to 267 (AMVLTVFCLSVFALIGLQLF). Residues 268–368 (MGNLRQKCVL…PNYGYTSYDS (101 aa)) lie on the Extracellular side of the membrane. The cysteines at positions 275 and 337 are disulfide-linked. 2 N-linked (GlcNAc...) asparagine glycosylation sites follow: N285 and N339. C346 and C352 are oxidised to a cystine. Residues 369–393 (FGWAFLALFRLMTQDFWENLFQLTL) constitute an intramembrane region (pore-forming). Topologically, residues 394-400 (RTAGKTY) are extracellular. The helical transmembrane segment at 401–421 (MIFFVVVIFLGSFYLINLILA) threads the bilayer. Over 422–513 (VVAMAYAEQN…ECLYAIVMDP (92 aa)) the chain is Cytoplasmic. The stretch at 495–766 (CCGCWRHLKE…QIAINRINRA (272 aa)) is one II repeat. A helical membrane pass occupies residues 514–532 (FVDLGITICIILNTVFMAM). At 533–543 (EHYPMSADFEE) the chain is on the extracellular side. Residues 544 to 563 (LLSVGNLVFTGIFTGEMVFK) form a helical membrane-spanning segment. Residues 564 to 577 (ILAMDPYFYFQVGW) are Cytoplasmic-facing. Residues 578–597 (NIFDSIIVTISLVELGLANV) traverse the membrane as a helical segment. The Extracellular segment spans residues 598–599 (QG). Residues 600 to 617 (LSVLRSFRLMRVFKLAKS) traverse the membrane as a helical segment. Over 618 to 633 (WPTLNMLIKIIGNSVG) the chain is Cytoplasmic. A helical membrane pass occupies residues 634-652 (ALGNLTLVLAIIVFIFAVV). Over 653–681 (GMQLFGKNYKDCVCRISEDCVLPRWHMND) the chain is Extracellular. C666 and C672 are joined by a disulfide. The segment at residues 682–702 (FFHAFLIIFRVLCGEWIESMW) is an intramembrane region (pore-forming). Over 703 to 713 (DCMEVSGQTMC) the chain is Extracellular. A disulfide bridge links C704 with C713. Residues 714 to 732 (LIVFMMVLVIGNLVVLNLF) form a helical membrane-spanning segment. Residues 733–919 (LALLLSSFSG…TCFSIVENNY (187 aa)) are Cytoplasmic-facing. Positions 834 to 845 (SDSDDSDYDEDK) are enriched in acidic residues. Residues 834 to 862 (SDSDDSDYDEDKDSQCDESSVCSSVQKPE) are disordered. One copy of the III repeat lies at 900–1215 (RGKIWCNIRR…KKYYNAMKKL (316 aa)). The helical transmembrane segment at 920-937 (FESFIVFMILLSSGALAF) threads the bilayer. Residues 938 to 950 (EDIYLEKHQLIKS) are Extracellular-facing. The chain crosses the membrane as a helical span at residues 951–969 (ILEYADKVFTYVFVMEMVL). Residues 970–983 (KWFAYGFKSYFSNA) lie on the Cytoplasmic side of the membrane. A helical transmembrane segment spans residues 984 to 1002 (WCWLDFLIVDVSLVSLTAN). The Extracellular segment spans residues 1003–1010 (ILGYSELG). A helical membrane pass occupies residues 1011–1029 (AIKSLRTLRALRPLRALSR). Residues 1030 to 1046 (FEGMRVVVNALVGAVPS) are Cytoplasmic-facing. The chain crosses the membrane as a helical span at residues 1047–1066 (IFNVLLVCLIFWLIFSIMGV). At 1067 to 1119 (NLFAGKFSYCFNETSQEIIDTKVVDNKTECIALIKANFTEVRWKNVKVNYDNV) the chain is on the extracellular side. An intrachain disulfide couples C1076 to C1096. N1078 and N1092 each carry an N-linked (GlcNAc...) asparagine glycan. An intramembrane region (pore-forming) is located at residues 1120–1141 (GIGYLSLLQVATFKGWTDIMYA). The Extracellular portion of the chain corresponds to 1142–1158 (AVDSRDVESQPIYEVNL). The helical transmembrane segment at 1159 to 1180 (YMYLYFVIFIIFGSFFTLNLFI) threads the bilayer. Residues 1181–1243 (GVIIDNFNQQ…LVFDLVTKQI (63 aa)) are Cytoplasmic-facing. The important for rapid channel inactivation stretch occupies residues 1199–1201 (IFM). The IV repeat unit spans residues 1224-1521 (VPRPENPFQG…WEKFDPDASQ (298 aa)). Residues 1244–1261 (FDVFIMVLICLNMVTMMV) form a helical membrane-spanning segment. The Extracellular segment spans residues 1262-1272 (ETDEQSDKKEE). A helical transmembrane segment spans residues 1273-1291 (VLYWINVVFILIFTTECTL). Residues 1292–1303 (KIIALRRHYFSI) lie on the Cytoplasmic side of the membrane. The helical transmembrane segment at 1304–1321 (GWNIFDFVVVILSILGLL) threads the bilayer. The Extracellular portion of the chain corresponds to 1322–1334 (LADIIEKYFVSPT). The chain crosses the membrane as a helical span at residues 1335–1351 (LFRVIRLARIGRVLRLI). Residues 1352 to 1370 (RGAKGIRTLLFALMMSLPA) lie on the Cytoplasmic side of the membrane. A helical membrane pass occupies residues 1371–1388 (LFNIGLLLFLIMFIFSIF). Over 1389-1410 (GMSNFAYVKKEALIDDMFNFET) the chain is Extracellular. An intramembrane region (pore-forming) is located at residues 1411-1433 (FGNSMICLFMITTSAGWDGLLSP). Residues 1434–1462 (IMNTPPDCDPNVENPGTTVRGNCGSPAIG) are Extracellular-facing. A disulfide bond links C1441 and C1456. The chain crosses the membrane as a helical span at residues 1463–1485 (IAFFSTYIIMSFLVVVNMFIAII). The Cytoplasmic segment spans residues 1486–1719 (LENFNVATEE…QERDQRETSV (234 aa)). The region spanning 1615 to 1644 (EEVAATVIQRAYRKYLLLRTVRLASFMYRE) is the IQ domain.

Belongs to the sodium channel (TC 1.A.1.10) family. Nav1.4/SCN4A subfamily. Voltage-gated sodium (Nav) channels consist of an ion-conducting alpha subunit which is functional on its own associated with regulatory beta subunits.

The protein resides in the cell membrane. It catalyses the reaction Na(+)(in) = Na(+)(out). Functionally, pore-forming subunit of a voltage-gated sodium (Nav) channel that directly mediates the depolarizing phase of action potentials in excitable membranes. Navs, also called VGSCs (voltage-gated sodium channels) or VDSCs (voltage-dependent sodium channels), operate by switching between closed and open conformations depending on the voltage difference across the membrane. In the open conformation they allow Na(+) ions to selectively pass through the pore, along their electrochemical gradient. The influx of Na+ ions provokes membrane depolarization, initiating the propagation of electrical signals throughout cells and tissues. In Takifugu rubripes (Japanese pufferfish), this protein is Sodium channel protein type 4 subunit alpha B (scn4ab).